Here is a 465-residue protein sequence, read N- to C-terminus: Glutamate--tRNA ligase (465 aa).

The 'HIGH' region signature appears at 11 to 21 (PSPTGFIHLGN). Basic and acidic residues predominate over residues 120–131 (KPRYDGTWRPEP). The disordered stretch occupies residues 120 to 139 (KPRYDGTWRPEPGKVLPTPP). Positions 243–247 (KMSKR) match the 'KMSKS' region motif. K246 is an ATP binding site.

It belongs to the class-I aminoacyl-tRNA synthetase family. Glutamate--tRNA ligase type 1 subfamily. In terms of assembly, monomer.

Its subcellular location is the cytoplasm. It carries out the reaction tRNA(Glu) + L-glutamate + ATP = L-glutamyl-tRNA(Glu) + AMP + diphosphate. In terms of biological role, catalyzes the attachment of glutamate to tRNA(Glu) in a two-step reaction: glutamate is first activated by ATP to form Glu-AMP and then transferred to the acceptor end of tRNA(Glu). This chain is Glutamate--tRNA ligase, found in Ralstonia nicotianae (strain ATCC BAA-1114 / GMI1000) (Ralstonia solanacearum).